Consider the following 67-residue polypeptide: ATP synthase F(0) complex subunit 8 (67 aa).

A helical membrane pass occupies residues Thr-8–Phe-24. Lys-54 is subject to N6-acetyllysine; alternate. Lys-54 carries the post-translational modification N6-succinyllysine; alternate. Residue Lys-57 is modified to N6-acetyllysine.

The protein belongs to the ATPase protein 8 family. As to quaternary structure, component of the ATP synthase complex composed at least of ATP5F1A/subunit alpha, ATP5F1B/subunit beta, ATP5MC1/subunit c (homooctomer), MT-ATP6/subunit a, MT-ATP8/subunit 8, ATP5ME/subunit e, ATP5MF/subunit f, ATP5MG/subunit g, ATP5MK/subunit k, ATP5MJ/subunit j, ATP5F1C/subunit gamma, ATP5F1D/subunit delta, ATP5F1E/subunit epsilon, ATP5PF/subunit F6, ATP5PB/subunit b, ATP5PD/subunit d, ATP5PO/subunit OSCP. ATP synthase complex consists of a soluble F(1) head domain (subunits alpha(3) and beta(3)) - the catalytic core - and a membrane F(0) domain - the membrane proton channel (subunits c, a, 8, e, f, g, k and j). These two domains are linked by a central stalk (subunits gamma, delta, and epsilon) rotating inside the F1 region and a stationary peripheral stalk (subunits F6, b, d, and OSCP). Interacts with PRICKLE3.

The protein localises to the mitochondrion membrane. Functionally, subunit 8, of the mitochondrial membrane ATP synthase complex (F(1)F(0) ATP synthase or Complex V) that produces ATP from ADP in the presence of a proton gradient across the membrane which is generated by electron transport complexes of the respiratory chain. ATP synthase complex consist of a soluble F(1) head domain - the catalytic core - and a membrane F(1) domain - the membrane proton channel. These two domains are linked by a central stalk rotating inside the F(1) region and a stationary peripheral stalk. During catalysis, ATP synthesis in the catalytic domain of F(1) is coupled via a rotary mechanism of the central stalk subunits to proton translocation. In vivo, can only synthesize ATP although its ATP hydrolase activity can be activated artificially in vitro. Part of the complex F(0) domain. This chain is ATP synthase F(0) complex subunit 8, found in Sus scrofa (Pig).